A 77-amino-acid chain; its full sequence is MKLMIFTGLVLFAIVRLIEAQAENEKPCLPEYKVCTHAPGNCCSDLVCDCYGRYKSGAQIGRNCFCLQKGVIYKREN.

The first 20 residues, 1–20, serve as a signal peptide directing secretion; the sequence is MKLMIFTGLVLFAIVRLIEA. Residues 21–26 constitute a propeptide that is removed on maturation; that stretch reads QAENEK.

It belongs to the neurotoxin 19 (CSTX) family. 08 (U8-Lctx) subfamily. Contains 4 disulfide bonds. In terms of tissue distribution, expressed by the venom gland.

It localises to the secreted. This Lycosa singoriensis (Wolf spider) protein is U8-lycotoxin-Ls1m.